A 530-amino-acid polypeptide reads, in one-letter code: UDP-glucuronosyltransferase 2B7 (530 aa).

The N-terminal stretch at 1–17 (MPQKWISALLLLQISFC) is a signal peptide. A glycan (N-linked (GlcNAc...) asparagine) is linked at Asn-316. UDP-alpha-D-glucuronate-binding positions include 374–380 (THGGANG) and Glu-400. The helical transmembrane segment at 496–516 (IGFLLACVLAIVLLAVKCCLF) threads the bilayer.

Belongs to the UDP-glycosyltransferase family.

Its subcellular location is the endoplasmic reticulum membrane. The enzyme catalyses glucuronate acceptor + UDP-alpha-D-glucuronate = acceptor beta-D-glucuronoside + UDP + H(+). It carries out the reaction 17alpha-estradiol + UDP-alpha-D-glucuronate = 17alpha-estradiol 17-O-(beta-D-glucuronate) + UDP + H(+). The catalysed reaction is 17beta-estradiol + UDP-alpha-D-glucuronate = 17beta-estradiol 17-O-(beta-D-glucuronate) + UDP + H(+). It catalyses the reaction 2-hydroxy-17beta-estradiol + UDP-alpha-D-glucuronate = 2-hydroxy-17beta-estradiol 3-O-(beta-D-glucuronate) + UDP + H(+). The enzyme catalyses 4-hydroxy-17beta-estradiol + UDP-alpha-D-glucuronate = 17beta-estradiol 4-O-(beta-D-glucuronate) + UDP + H(+). It carries out the reaction 4-hydroxyestrone + UDP-alpha-D-glucuronate = estrone 4-O-(beta-D-glucuronate) + UDP + H(+). The catalysed reaction is 16alpha-hydroxyestrone + UDP-alpha-D-glucuronate = 16alpha-hydroxyestrone 16-O-(beta-D-glucuronate) + UDP + H(+). It catalyses the reaction 16alpha,17beta-estriol + UDP-alpha-D-glucuronate = 16alpha,17beta-estriol 16-O-(beta-D-glucuronate) + UDP + H(+). The enzyme catalyses 16beta,17beta-estriol + UDP-alpha-D-glucuronate = 16beta,17beta-estriol 16-O-(beta-D-glucuronate) + UDP + H(+). It carries out the reaction 16alpha,17alpha-estriol + UDP-alpha-D-glucuronate = 16alpha,17alpha-estriol 16-O-(beta-D-glucuronate) + UDP + H(+). The catalysed reaction is 16alpha,17alpha-estriol + UDP-alpha-D-glucuronate = 16alpha,17alpha-estriol 17-O-(beta-D-glucuronate) + UDP + H(+). It catalyses the reaction epitestosterone + UDP-alpha-D-glucuronate = epitestosterone 17-O-(beta-D-glucuronate) + UDP + H(+). The enzyme catalyses hyodeoxycholate + UDP-alpha-D-glucuronate = hyodeoxycholate 6-O-(beta-D-glucuronate) + UDP + H(+). It carries out the reaction hyocholate + UDP-alpha-D-glucuronate = hyocholate 6-O-(beta-D-glucuronate) + UDP + H(+). The catalysed reaction is all-trans-retinoate + UDP-alpha-D-glucuronate = all-trans-retinoyl-1-O-(beta-D-glucuronate) + UDP. It catalyses the reaction all-trans-4-hydroxyretinoate + UDP-alpha-D-glucuronate = all-trans-4-hydroxy-4-O-(beta-D-glucuronide)-retinoate + UDP + H(+). The enzyme catalyses (E)-ferulate + UDP-alpha-D-glucuronate = (E)-ferulic acid beta-D-glucuronate ester + UDP. It carries out the reaction 8-iso-prostaglandin F2alpha + UDP-alpha-D-glucuronate = 8-iso-prostaglandin F2alpha-glucuronide + UDP + H(+). The catalysed reaction is 5-epi-5-F2t-IsoP + UDP-alpha-D-glucuronate = 5-epi-5-F2t-IsoP-glucuronide + UDP + H(+). It catalyses the reaction (5Z,8Z,11Z,14Z)-eicosatetraenoate + UDP-alpha-D-glucuronate = O-[(5Z),(8Z),(11Z),(14Z)-eicosatetraenoyl]-beta-D-glucuronate + UDP. The enzyme catalyses 15-hydroxy-(5Z,8Z,11Z,13E)-eicosatetraenoate + UDP-alpha-D-glucuronate = 15-O-(beta-D-glucuronosyl)-(5Z,8Z,11Z,14Z)-eicosatetraenoate + UDP + H(+). It carries out the reaction 20-hydroxy-(5Z,8Z,11Z,14Z)-eicosatetraenoate + UDP-alpha-D-glucuronate = 20-O-(beta-D-glucuronosyl)-(5Z,8Z,11Z,14Z)-eicosatetraenoate + UDP + H(+). The catalysed reaction is (E)-ferulate + UDP-alpha-D-glucuronate = (E)-4-O-(beta-D-glucuronosyl)-ferulate + UDP + H(+). It catalyses the reaction prostaglandin B1 + UDP-alpha-D-glucuronate = 15-O-(beta-D-glucuronosyl)-prostaglandin B1 + UDP + H(+). The enzyme catalyses mycophenolate + UDP-alpha-D-glucuronate = mycophenolic acid O-acyl-beta-D-glucuronide + UDP. It carries out the reaction losartan + UDP-alpha-D-glucuronate = losartan-2-N-beta-D-glucuronide + UDP. The catalysed reaction is candesartan + UDP-alpha-D-glucuronate = candesartan O-beta-D-glucuronoside + UDP. It catalyses the reaction candesartan + UDP-alpha-D-glucuronate = candesartan-2-N-beta-D-glucuronide + UDP. The enzyme catalyses zolasartan + UDP-alpha-D-glucuronate = zolarsartan O-beta-D-glucuronoside + UDP. Functionally, UDP-glucuronosyltransferase (UGT) that catalyzes phase II biotransformation reactions in which lipophilic substrates are conjugated with glucuronic acid to increase the metabolite's water solubility, thereby facilitating excretion into either the urine or bile. Essential for the elimination and detoxification of drugs, xenobiotics and endogenous compounds. Catalyzes the glucuronidation of endogenous steroid hormones such as androgens (epitestosterone, androsterone) and estrogens (estradiol, epiestradiol, estriol, catechol estrogens). Also regulates the levels of retinoic acid, a major metabolite of vitamin A involved in apoptosis, cellular growth and differentiation, and embryonic development. Contributes to bile acid (BA) detoxification by catalyzing the glucuronidation of BA substrates, which are natural detergents for dietary lipids absorption. Involved in the glucuronidation of arachidonic acid (AA) and AA-derived eicosanoids including 15-HETE, 20-HETE, PGE2, PGB1 and F2-isoprostanes (8-iso-PGF2alpha and 5-epi-5-F2t-IsoP). Involved in the glucuronidation of the phytochemical ferulic acid at the phenolic or the carboxylic acid group. Involved in the glucuronidation of the AGTR1 angiotensin receptor antagonist losartan, caderastan and zolarsatan, drugs which can inhibit the effect of angiotensin II. Also metabolizes mycophenolate, an immunosuppressive agent. The sequence is that of UDP-glucuronosyltransferase 2B7 from Rattus norvegicus (Rat).